Consider the following 36-residue polypeptide: ECVPENGHCRDWYDECCEGFYCSCRQPPKCICRNNN.

4 disulfides stabilise this stretch: Cys2–Cys17, Cys9–Cys22, Cys16–Cys32, and Cys24–Cys30. Residue Asn36 is modified to Asparagine amide.

The protein belongs to the neurotoxin 07 (Beta/delta-agtx) family. 04 (aga-5) subfamily. As to expression, expressed by the venom gland.

It localises to the secreted. Functionally, insecticidal neurotoxin that induces an irreversible spastic paralysis when injected into insects. Modifies presynaptic voltage-gated sodium channels (Nav), causing them to open at the normal resting potential of the nerve. This leads to spontaneous release of neurotransmitter and repetitive action potentials in motor neurons. This Agelenopsis aperta (North American funnel-web spider) protein is Mu-agatoxin-Aa1a.